Consider the following 387-residue polypeptide: EP300-interacting inhibitor of differentiation 3 (387 aa).

Residues 1–19 (MSEEKCSLTGGEEKGEELA) show a composition bias toward basic and acidic residues. Positions 1–77 (MSEEKCSLTG…SDDLSPEAPC (77 aa)) are disordered. A compositionally biased stretch (acidic residues) spans 32–72 (EEDDDDDEEALKKEEEEEEEEEEEDEEEEEEGPDSSSDDLS).

Belongs to the NSE4 family. Component of the SMC5-SMC6 complex which consists at least of SMC5, SMC6, NSMCE2, NSMCE1, NSMCE4A or EID3 and NSMCE3. NSMCE1, NSMCE4A or EID3 and NSMCE3 probably form a subcomplex that bridges the head domains of the SMC5:SMC6 heterodimer. Homodimer, and heterodimer with EID2. Interacts with the C-terminal region of CREBBP.

The protein localises to the nucleus. It localises to the cytoplasm. The protein resides in the chromosome. It is found in the telomere. Tissue-specific component of the SMC5-SMC6 complex, a complex involved in repair of DNA double-strand breaks by homologous recombination. The complex may promote sister chromatid homologous recombination by recruiting the SMC1-SMC3 cohesin complex to double-strand breaks. The complex is required for telomere maintenance via recombination and mediates sumoylation of shelterin complex (telosome) components. Functionally, acts as a repressor of nuclear receptor-dependent transcription possibly by interfering with CREBBP-dependent coactivation. May function as a coinhibitor of other CREBBP/EP300-dependent transcription factors. The protein is EP300-interacting inhibitor of differentiation 3 of Rattus norvegicus (Rat).